We begin with the raw amino-acid sequence, 558 residues long: Protein NRT1/ PTR FAMILY 2.7 (558 aa).

The next 12 membrane-spanning stretches (helical) occupy residues 31-51, 63-83, 90-110, 140-162, 178-198, 204-224, 319-339, 357-377, 399-419, 440-460, 479-499, and 518-538; these read FMIA…LNLI, IAAA…PAVA, FFGT…GVAL, LGVL…FTLA, FFNW…TAIV, ISWT…FLVF, IIPL…QLSL, IPAG…IIVN, VGIG…VEAK, VLWL…HFPG, SITS…IDLI, and VYWI…VCSW.

This sequence belongs to the major facilitator superfamily. Proton-dependent oligopeptide transporter (POT/PTR) (TC 2.A.17) family. Expressed in shoots and in the cortex of mature roots. Not expressed in root tip meristematic cells.

It is found in the cell membrane. Functionally, transporter involved in a passive nitrate efflux. Not competent for chloride transport. This is Protein NRT1/ PTR FAMILY 2.7 (NPF2.7) from Arabidopsis thaliana (Mouse-ear cress).